A 327-amino-acid chain; its full sequence is Diacylglycerol acyltransferase/mycolyltransferase Ag85B (327 aa).

A signal peptide spans 1-38 (MIDVSGKIRAWGRWLLVGAAATLPSLISLAGGAATASA). Substrate is bound at residue 80–81 (LR). Residues 96-106 (FEWYYQSGLSV) are fibronectin-binding. Cysteine 125 and cysteine 130 are disulfide-bonded. Substrate-binding residues include serine 164 and aspartate 192. Serine 164 serves as the catalytic Nucleophile. Glutamate 268 is an active-site residue. Substrate contacts are provided by residues 270–273 (FVHG), lysine 277, and 300–302 (HSW). The active site involves histidine 300.

The protein belongs to the mycobacterial A85 antigen family.

The protein resides in the secreted. The enzyme catalyses 2 alpha,alpha'-trehalose 6-mycolate = alpha,alpha'-trehalose 6,6'-bismycolate + alpha,alpha-trehalose. It catalyses the reaction an acyl-CoA + a 1,2-diacyl-sn-glycerol = a triacyl-sn-glycerol + CoA. Functionally, the antigen 85 proteins (FbpA, FbpB, FbpC) are responsible for the high affinity of mycobacteria for fibronectin, a large adhesive glycoprotein, which facilitates the attachment of M.tuberculosis to murine alveolar macrophages (AMs). They also help to maintain the integrity of the cell wall by catalyzing the transfer of mycolic acids to cell wall arabinogalactan and through the synthesis of alpha,alpha-trehalose dimycolate (TDM, cord factor). They catalyze the transfer of a mycoloyl residue from one molecule of alpha,alpha-trehalose monomycolate (TMM) to another TMM, leading to the formation of TDM. This is Diacylglycerol acyltransferase/mycolyltransferase Ag85B (fbpB) from Mycobacterium leprae (strain TN).